A 210-amino-acid chain; its full sequence is Casparian strip membrane protein 1 (210 aa).

The interval 1-25 (MEKSEATTIDVAETSRESKGKAPLL) is disordered. The Cytoplasmic portion of the chain corresponds to 1 to 48 (MEKSEATTIDVAETSRESKGKAPLLRDPPAWVPAAVERQRAAPAYKRG). The helical transmembrane segment at 49-69 (VAIFDLILRISAATAALAATI) threads the bilayer. The Extracellular segment spans residues 70–98 (TMGTTEQTLPFFTQFFQFQASYDDLPTFT). Residues 99–119 (FFVIAMSIVTGYLVLSVPFSI) traverse the membrane as a helical segment. The Cytoplasmic segment spans residues 120-138 (VCIARPVAAAPRLLLILCD). A helical membrane pass occupies residues 139 to 159 (TLAVTLNTSAAGASAAIVYLA). Residues 160 to 183 (HNGNSDANWLAICQQFNDFCQRTS) lie on the Extracellular side of the membrane. The chain crosses the membrane as a helical span at residues 184–204 (GAVVASFVAVVLLIFLVVLSA). Residues 205–210 (SALKKH) lie on the Cytoplasmic side of the membrane.

This sequence belongs to the Casparian strip membrane proteins (CASP) family. In terms of assembly, homodimer and heterodimers.

The protein resides in the cell membrane. Functionally, regulates membrane-cell wall junctions and localized cell wall deposition. Required for establishment of the Casparian strip membrane domain (CSD) and the subsequent formation of Casparian strips, a cell wall modification of the root endodermis that determines an apoplastic barrier between the intraorganismal apoplasm and the extraorganismal apoplasm and prevents lateral diffusion. The protein is Casparian strip membrane protein 1 of Erythranthe guttata (Yellow monkey flower).